A 264-amino-acid polypeptide reads, in one-letter code: Phycocyanobilin:ferredoxin oxidoreductase (264 aa).

Belongs to the HY2 family.

It catalyses the reaction (2R,3Z)-phycocyanobilin + 4 oxidized [2Fe-2S]-[ferredoxin] = biliverdin IXalpha + 4 reduced [2Fe-2S]-[ferredoxin] + 4 H(+). Catalyzes the four-electron reduction of biliverdin IX-alpha (2-electron reduction at both the A and D rings); the reaction proceeds via an isolatable 2-electron intermediate, 181,182-dihydrobiliverdin. The protein is Phycocyanobilin:ferredoxin oxidoreductase of Prochlorococcus marinus (strain MIT 9303).